The chain runs to 538 residues: Syncytin-1 (538 aa).

Positions 1–20 (MALPYHIFLFTVLLPSFTLT) are cleaved as a signal peptide. Residues 21–443 (APPPCRCMTS…NTGPWGLLSQ (423 aa)) are Extracellular-facing. Residue Asn-169 is glycosylated (N-linked (GlcNAc...) asparagine). A CXXC motif is present at residues 186-189 (CWIC). 3 disulfide bridges follow: Cys-186–Cys-189, Cys-186–Cys-405, and Cys-397–Cys-404. Asn-208, Asn-214, Asn-234, Asn-242, and Asn-281 each carry an N-linked (GlcNAc...) asparagine glycan. The interval 320–340 (ILPFVIGAGVLGALGTGIGGI) is fusion peptide. Residues 380-396 (LQNRRALDLLTAERGGT) are immunosuppression. The short motif at 397 to 406 (CLFLGEECCY) is the CX6CC element. An N-linked (GlcNAc...) asparagine glycan is attached at Asn-409. Residues 444–464 (WMPWILPFLGPLAAIILLLLF) traverse the membrane as a helical segment. The tract at residues 465-484 (GPCIFNLLVNFVSSRIEAVK) is essential for the fusiogenic function. Residues 465 to 538 (GPCIFNLLVN…LLRPNSAGSS (74 aa)) lie on the Cytoplasmic side of the membrane. The segment at 496–538 (KIYRRPLDRPASPRSDVNDIKGTPPEEISAAQPLLRPNSAGSS) is disordered.

The protein belongs to the gamma type-C retroviral envelope protein family. HERV class-I W env subfamily. As to quaternary structure, the mature envelope protein (Env) consists of a trimer of SU-TM heterodimers attached probably by a labile interchain disulfide bond. Interacts with the C-type lectin CD209/DC-SIGN. Specific enzymatic cleavages in vivo yield mature proteins. Envelope glycoproteins are synthesized as an inactive precursor that is heavily N-glycosylated and processed likely by furin in the Golgi to yield the mature SU and TM proteins. The cleavage site between SU and TM requires the minimal sequence [KR]-X-[KR]-R. The intracytoplasmic tail cleavage by the viral protease that is required for the fusiogenic activity of some retroviruses envelope proteins seems to have been lost during evolution. Post-translationally, the CXXC motif is highly conserved across a broad range of retroviral envelope proteins. It is thought to participate in the formation of a labile disulfide bond possibly with the CX6CC motif present in the transmembrane protein. Isomerization of the intersubunit disulfide bond to an SU intrachain disulfide bond is thought to occur upon receptor recognition in order to allow membrane fusion. In terms of tissue distribution, expressed at higher level in placental syncytiotrophoblast. Expressed at intermediate level in testis. Seems also to be found at low level in adrenal tissue, bone marrow, breast, colon, kidney, ovary, prostate, skin, spleen, thymus, thyroid, brain and trachea. Both mRNA and protein levels are significantly increased in the brain of individuals with multiple sclerosis, particularly in astrocytes and microglia.

Its subcellular location is the cell membrane. The protein resides in the virion. Its function is as follows. This endogenous retroviral envelope protein has retained its original fusogenic properties and participates in trophoblast fusion and the formation of a syncytium during placenta morphogenesis. May induce fusion through binding of SLC1A4 and SLC1A5. Endogenous envelope proteins may have kept, lost or modified their original function during evolution. Retroviral envelope proteins mediate receptor recognition and membrane fusion during early infection. The surface protein (SU) mediates receptor recognition, while the transmembrane protein (TM) acts as a class I viral fusion protein. The protein may have at least 3 conformational states: pre-fusion native state, pre-hairpin intermediate state, and post-fusion hairpin state. During viral and target cell membrane fusion, the coiled coil regions (heptad repeats) assume a trimer-of-hairpins structure, positioning the fusion peptide in close proximity to the C-terminal region of the ectodomain. The formation of this structure appears to drive apposition and subsequent fusion of membranes. This Homo sapiens (Human) protein is Syncytin-1 (ERVW-1).